Reading from the N-terminus, the 263-residue chain is 3-oxo-5-alpha-steroid 4-dehydrogenase 1 (263 aa).

5 helical membrane-spanning segments follow: residues M16–A33, I90–M110, P115–Q135, F155–I175, and Y213–L233.

Belongs to the steroid 5-alpha reductase family.

It localises to the microsome membrane. It is found in the endoplasmic reticulum membrane. It carries out the reaction a 3-oxo-5alpha-steroid + NADP(+) = a 3-oxo-Delta(4)-steroid + NADPH + H(+). It catalyses the reaction 5alpha-pregnane-3,20-dione + NADP(+) = progesterone + NADPH + H(+). The enzyme catalyses 17beta-hydroxy-5alpha-androstan-3-one + NADP(+) = testosterone + NADPH + H(+). The catalysed reaction is androst-4-ene-3,17-dione + NADPH + H(+) = 5alpha-androstan-3,17-dione + NADP(+). Functionally, converts testosterone into 5-alpha-dihydrotestosterone and progesterone or corticosterone into their corresponding 5-alpha-3-oxosteroids. It plays a central role in sexual differentiation and androgen physiology. The sequence is that of 3-oxo-5-alpha-steroid 4-dehydrogenase 1 (SRD5A1) from Macaca fascicularis (Crab-eating macaque).